The chain runs to 146 residues: DNA-directed RNA polymerase subunit beta (146 aa).

It belongs to the RNA polymerase beta chain family. In terms of assembly, the RNAP catalytic core consists of 2 alpha, 1 beta, 1 beta' and 1 omega subunit. When a sigma factor is associated with the core the holoenzyme is formed, which can initiate transcription.

It carries out the reaction RNA(n) + a ribonucleoside 5'-triphosphate = RNA(n+1) + diphosphate. Its function is as follows. DNA-dependent RNA polymerase catalyzes the transcription of DNA into RNA using the four ribonucleoside triphosphates as substrates. The sequence is that of DNA-directed RNA polymerase subunit beta (rpoB) from Liberibacter africanus (Citrus greening disease).